A 305-amino-acid polypeptide reads, in one-letter code: Putative E3 ubiquitin-protein ligase SINAT1 (305 aa).

An RING-type zinc finger spans residues 57-93 (CPVCTNLMYPPIHQCPNGHTLCSSCKLRVQNTCPTCR). The interval 107-300 (VAESLEVPCR…EELKLRVTGR (194 aa)) is SBD. Residues 110–170 (SLEVPCRYQN…LVDHLKDDHK (61 aa)) form an SIAH-type zinc finger. Zn(2+) is bound by residues C115, C122, H134, C138, C145, C152, H164, and H169.

The protein belongs to the SINA (Seven in absentia) family. Interacts with SINAT6. Interacts with ATG6 and TRAF1A. Interacts with WAV3. Interacts with FREE1. Interacts with ELC/VPS23A.

It localises to the endosome. It is found in the multivesicular body. The protein resides in the cytoplasmic vesicle. Its subcellular location is the autophagosome. The catalysed reaction is S-ubiquitinyl-[E2 ubiquitin-conjugating enzyme]-L-cysteine + [acceptor protein]-L-lysine = [E2 ubiquitin-conjugating enzyme]-L-cysteine + N(6)-ubiquitinyl-[acceptor protein]-L-lysine.. It functions in the pathway protein modification; protein ubiquitination. Functionally, E3 ubiquitin-protein ligase that mediates ubiquitination and subsequent proteasomal degradation of target proteins. E3 ubiquitin ligases accept ubiquitin from an E2 ubiquitin-conjugating enzyme in the form of a thioester and then directly transfers the ubiquitin to targeted substrates. It probably triggers the ubiquitin-mediated degradation of different substrates. Mediates the proteasomal-dependent degradation of ATG6, a component of the autophagosome complex. Requires TRAF1A/MUSE14 and TRAF1B/MUSE13 to target ATG6 for ubiquitination and subsequent regulation of autophagosome assembly. Modulates directly the ubiquitination and proteasomal-dependent degradation of FREE1, a component of the ESCRT-I complex. Modulates directly the ubiquitination and proteasomal-dependent degradation of ELC/VPS23A, a component of the ESCRT-I complex. The sequence is that of Putative E3 ubiquitin-protein ligase SINAT1 from Arabidopsis thaliana (Mouse-ear cress).